Consider the following 106-residue polypeptide: Gibberellin-regulated protein 4 (106 aa).

The N-terminal stretch at 1-25 is a signal peptide; the sequence is MAKSYGAIFLLTLIVLFMLQTMVMA.

The protein belongs to the GASA family. In terms of processing, six disulfide bonds may be present. As to expression, expressed in flower buds, style, stamen filaments, vasculature of petals, root phloem, vasculature of cotyledons and rosette leaves and developing embryo.

Its subcellular location is the secreted. Its function is as follows. Gibberellin-regulated protein involved in the regulation of floral meristem and floral organ identity, and promotion of seed size and weight. May play a role in the promotion of gibberellin responses such as regulation of flowering under short-day conditions, seed germination and inhibition of gibberellin oxidase. Possesses redox activity in E.coli and may function in redox regulation in planta. This chain is Gibberellin-regulated protein 4 (GASA4), found in Arabidopsis thaliana (Mouse-ear cress).